A 222-amino-acid polypeptide reads, in one-letter code: 7-cyano-7-deazaguanine synthase (222 aa).

8–18 (LSGGMDSTTLA) is an ATP binding site. Residues C188, C196, C199, and C202 each coordinate Zn(2+).

This sequence belongs to the QueC family. It depends on Zn(2+) as a cofactor.

It carries out the reaction 7-carboxy-7-deazaguanine + NH4(+) + ATP = 7-cyano-7-deazaguanine + ADP + phosphate + H2O + H(+). Its pathway is purine metabolism; 7-cyano-7-deazaguanine biosynthesis. Functionally, catalyzes the ATP-dependent conversion of 7-carboxy-7-deazaguanine (CDG) to 7-cyano-7-deazaguanine (preQ(0)). This chain is 7-cyano-7-deazaguanine synthase, found in Methanoculleus marisnigri (strain ATCC 35101 / DSM 1498 / JR1).